The sequence spans 102 residues: Large ribosomal subunit protein uL24 (102 aa).

This sequence belongs to the universal ribosomal protein uL24 family. As to quaternary structure, part of the 50S ribosomal subunit.

One of two assembly initiator proteins, it binds directly to the 5'-end of the 23S rRNA, where it nucleates assembly of the 50S subunit. Functionally, one of the proteins that surrounds the polypeptide exit tunnel on the outside of the subunit. The chain is Large ribosomal subunit protein uL24 from Agrobacterium fabrum (strain C58 / ATCC 33970) (Agrobacterium tumefaciens (strain C58)).